Reading from the N-terminus, the 170-residue chain is Cathelicidin antimicrobial peptide (170 aa).

The N-terminal stretch at 1–30 is a signal peptide; that stretch reads MKTQRDGPSLGRWSLVLLLLGLTMPLAITA. Positions 31–131 are cleaved as a propeptide — cathelin-like domain (CLD); the sequence is QVLSYQEAVL…DISCDKDERK (101 aa). Disulfide bonds link cysteine 86-cysteine 97 and cysteine 108-cysteine 125. Residues 150 to 162 form an active core region; that stretch reads FKKIGQKINDFLG.

The protein belongs to the cathelicidin family. As to quaternary structure, monomer, homodimer or homotrimer (in vitro). Oligomerizes as tetra- or hexamer in solution (in vitro). Proteolytically cleaved by proteinase PRTN3 into antibacterial peptide LL-37. Proteolytically cleaved by cathepsin CTSG and neutrophil elastase ELANE. In terms of processing, resistant to proteolytic degradation in solution, and when bound to both zwitterionic (mimicking mammalian membranes) and negatively charged membranes (mimicking bacterial membranes). Post-translationally, after secretion onto the skin surface, the CAMP gene product is processed by a serine protease-dependent mechanism into multiple novel antimicrobial peptides distinct from and shorter than cathelicidin LL-37. These peptides show enhanced antimicrobial action, acquiring the ability to kill skin pathogens such as S.aureus, E.coli and C.albicans. These peptides have lost the ability to stimulate CXCL8/IL8 release from keratinocytes. The peptides act synergistically, killing bacteria at lower concentrations when present together, and maintain activity at increased salt condition.

The protein localises to the secreted. It is found in the vesicle. Its function is as follows. Antimicrobial protein that is an integral component of the innate immune system. Binds to bacterial lipopolysaccharides (LPS). Acts via neutrophil N-formyl peptide receptors to enhance the release of CXCL2. Postsecretory processing generates multiple cathelicidin antimicrobial peptides with various lengths which act as a topical antimicrobial defense in sweat on skin. The unprocessed precursor form, cathelicidin antimicrobial peptide, inhibits the growth of Gram-negative E.coli and E.aerogenes with efficiencies comparable to that of the mature peptide LL-37 (in vitro). In terms of biological role, antimicrobial peptide that is an integral component of the innate immune system. Binds to bacterial lipopolysaccharides (LPS). Causes membrane permeabilization by forming transmembrane pores (in vitro). Causes lysis of E.coli. Exhibits antimicrobial activity against Gram-negative bacteria such as P.aeruginosa, S.typhimurium, E.aerogenes, E.coli and P.syringae, Gram-positive bacteria such as L.monocytogenes, S.epidermidis, S.pyogenes and S.aureus, as well as vancomycin-resistant enterococci (in vitro). Exhibits antimicrobial activity against methicillin-resistant S.aureus, P.mirabilis, and C.albicans in low-salt media, but not in media containing 100 mM NaCl (in vitro). Forms chiral supramolecular assemblies with quinolone signal (PQS) molecules of P.aeruginosa, which may lead to interference of bacterial quorum signaling and perturbance of bacterial biofilm formation. May form supramolecular fiber-like assemblies on bacterial membranes. Induces cytokine and chemokine producation as well as TNF/TNFA and CSF2/GMCSF production in normal human keratinocytes. Exhibits hemolytic activity against red blood cells. Functionally, exhibits antimicrobial activity against E.coli and B.megaterium (in vitro). The protein is Cathelicidin antimicrobial peptide of Cebus capucinus (White-faced sapajou).